A 634-amino-acid chain; its full sequence is Glutamate--tRNA ligase (634 aa).

Positions 108-118 (PNPSGPLHIGH) match the 'HIGH' region motif.

The protein belongs to the class-I aminoacyl-tRNA synthetase family. Glutamate--tRNA ligase type 2 subfamily.

The protein resides in the cytoplasm. The catalysed reaction is tRNA(Glu) + L-glutamate + ATP = L-glutamyl-tRNA(Glu) + AMP + diphosphate. In terms of biological role, catalyzes the attachment of glutamate to tRNA(Glu) in a two-step reaction: glutamate is first activated by ATP to form Glu-AMP and then transferred to the acceptor end of tRNA(Glu). The chain is Glutamate--tRNA ligase from Methanoregula boonei (strain DSM 21154 / JCM 14090 / 6A8).